A 397-amino-acid polypeptide reads, in one-letter code: Serpin B10 (397 aa).

A disulfide bond links cysteine 68 and cysteine 395. A Nuclear localization signal motif is present at residues 74–77; that stretch reads KKRK.

The protein belongs to the serpin family. Ov-serpin subfamily. As to expression, expressed specifically in myeloid cells and the bone marrow.

It localises to the nucleus. The protein localises to the cytoplasm. Protease inhibitor that may play a role in the regulation of protease activities during hematopoiesis and apoptosis induced by TNF. May regulate protease activities in the cytoplasm and in the nucleus. This chain is Serpin B10 (SERPINB10), found in Homo sapiens (Human).